The following is a 66-amino-acid chain: Conotoxin TsMEKL-03 (66 aa).

Residues 1–9 (VILLMSTQA) form the signal peptide. A propeptide spanning residues 10 to 38 (LIQSGVEKRSNKIKALSKRKTTAESWWEG) is cleaved from the precursor. Intrachain disulfides connect Cys-40-Cys-54, Cys-47-Cys-58, and Cys-53-Cys-63.

Belongs to the conotoxin O2 superfamily. In terms of tissue distribution, expressed by the venom duct.

The protein resides in the secreted. This Conus tessulatus (Tessellate cone) protein is Conotoxin TsMEKL-03.